We begin with the raw amino-acid sequence, 167 residues long: Phospholipase A2 heteromtoxin (167 aa).

Residues Trp-38, Gly-40, and Gly-42 each coordinate Ca(2+). Disulfide bonds link Cys-39–Cys-61, Cys-60–Cys-99, Cys-67–Cys-92, Cys-90–Cys-127, and Cys-132–Cys-144. Residue His-64 is part of the active site. A Ca(2+)-binding site is contributed by Asp-65. Positions 136 to 140 are excised as a propeptide; it reads GRSAR.

It belongs to the phospholipase A2 family. Group III subfamily. Heterodimer composed of a large and a small subunits; disulfide-linked. The cofactor is Ca(2+). In terms of tissue distribution, expressed by the venom gland.

Its subcellular location is the secreted. It carries out the reaction a 1,2-diacyl-sn-glycero-3-phosphocholine + H2O = a 1-acyl-sn-glycero-3-phosphocholine + a fatty acid + H(+). Functionally, phospholipase toxin, which catalyzes the calcium-dependent hydrolysis of the 2-acyl groups in 3-sn-phosphoglycerides. Inhibits both skeletal (RYR1) and cardiac (RYR2) ryanodine receptors (calcium release channels). Probably blocks ryanodine receptors by generating a lipid product. The chain is Phospholipase A2 heteromtoxin from Heterometrus laoticus (Thai giant scorpion).